We begin with the raw amino-acid sequence, 416 residues long: Glutamyl-tRNA reductase (416 aa).

Residues 51-54, S110, 115-117, and Q121 each bind substrate; these read TCNR and EPQ. C52 acts as the Nucleophile in catalysis. NADP(+) is bound at residue 190–195; the sequence is GAGQTG.

This sequence belongs to the glutamyl-tRNA reductase family. Homodimer.

It catalyses the reaction (S)-4-amino-5-oxopentanoate + tRNA(Glu) + NADP(+) = L-glutamyl-tRNA(Glu) + NADPH + H(+). The protein operates within porphyrin-containing compound metabolism; protoporphyrin-IX biosynthesis; 5-aminolevulinate from L-glutamyl-tRNA(Glu): step 1/2. In terms of biological role, catalyzes the NADPH-dependent reduction of glutamyl-tRNA(Glu) to glutamate 1-semialdehyde (GSA). The polypeptide is Glutamyl-tRNA reductase (Francisella tularensis subsp. tularensis (strain FSC 198)).